A 768-amino-acid polypeptide reads, in one-letter code: DNA ligase (768 aa).

Residues 1 to 11 (MSPSAPANSAP) are compositionally biased toward low complexity. Residues 1–28 (MSPSAPANSAPDPDRNGVPDVGPASAAP) are disordered. NAD(+)-binding positions include 62–66 (DAEYD), 111–112 (SI), and Glu-148. Residue Lys-150 is the N6-AMP-lysine intermediate of the active site. Arg-171, Glu-238, Lys-361, and Lys-385 together coordinate NAD(+). Zn(2+) is bound by residues Cys-484, Cys-487, Cys-502, and Cys-508. The region spanning 670 to 759 (AAELPLAGKT…EADADADAEG (90 aa)) is the BRCT domain.

This sequence belongs to the NAD-dependent DNA ligase family. LigA subfamily. Mg(2+) serves as cofactor. It depends on Mn(2+) as a cofactor.

It carries out the reaction NAD(+) + (deoxyribonucleotide)n-3'-hydroxyl + 5'-phospho-(deoxyribonucleotide)m = (deoxyribonucleotide)n+m + AMP + beta-nicotinamide D-nucleotide.. DNA ligase that catalyzes the formation of phosphodiester linkages between 5'-phosphoryl and 3'-hydroxyl groups in double-stranded DNA using NAD as a coenzyme and as the energy source for the reaction. It is essential for DNA replication and repair of damaged DNA. In Leptothrix cholodnii (strain ATCC 51168 / LMG 8142 / SP-6) (Leptothrix discophora (strain SP-6)), this protein is DNA ligase.